The following is a 196-amino-acid chain: Homeobox protein XENK-2 (196 aa).

Positions 48–72 are disordered; sequence PSADESPDNDKELSSNPDSGKKRKR. A DNA-binding region (homeobox) is located at residues 69–128; it reads KRKRRVLFSKAQTYELERRFRQQRYLSAPEREHLASLIRLTPTQVKIWFQNHRYKMKRAR.

Belongs to the NK-2 homeobox family. Forebrain and midbrain.

The protein localises to the nucleus. Its function is as follows. Defines dorsal-ventral domains in developing brain. May play a role in defining positional information along the anterior-posterior (a/p) axis and the dorsal-ventral (d/v) axis of the developing nervous system. May be involved in determining positional or boundary information rather than determining a given cell type. The polypeptide is Homeobox protein XENK-2 (Xenopus laevis (African clawed frog)).